Consider the following 400-residue polypeptide: MLTLVLNCGSSSVKFALLDLSANLTLLSGLAERLGSTGAVATLSRGENRRSVPVPDGSYAGAFEVVRAELGALGVREQVRAVGHRVVHGGERFSAPALIDAKVMAAIRACVPLAPLHNPANIAGIEAAQEAFGQLPHVAVFDTAFHQTMPDVAFRYAVPESWYAQHGVRRYGFHGTSHAYVAAEAARMLGMPLDALNLVTAHLGNGCSVAAVQGGRSIDTSMGLTPLEGLIMGTRSGDVDPGLHEFMARQAGLSLTQVTAALNKESGLSGLSGGLGSDMRELEAAAGRGHTGARLAVAAFVYRLAKGVAGMAVALGHLDALVFTGGIGENSATIRAATLERLGVLGFRLDQQANAQAVRGQPGLISAAGSVPALVVNTNEELSIARQTRQVLAAQTGDQA.

N7 contacts Mg(2+). K14 serves as a coordination point for ATP. Substrate is bound at residue R85. Catalysis depends on D142, which acts as the Proton donor/acceptor. Residues H202–G206, D278–R280, and G326–N330 each bind ATP. E380 contacts Mg(2+).

It belongs to the acetokinase family. In terms of assembly, homodimer. Mg(2+) serves as cofactor. It depends on Mn(2+) as a cofactor.

The protein resides in the cytoplasm. It carries out the reaction acetate + ATP = acetyl phosphate + ADP. The protein operates within metabolic intermediate biosynthesis; acetyl-CoA biosynthesis; acetyl-CoA from acetate: step 1/2. Functionally, catalyzes the formation of acetyl phosphate from acetate and ATP. Can also catalyze the reverse reaction. In Deinococcus deserti (strain DSM 17065 / CIP 109153 / LMG 22923 / VCD115), this protein is Acetate kinase.